The sequence spans 219 residues: Large ribosomal subunit protein bL25 (219 aa).

Residues 194–219 (SSTELEETPEVPASAVPTTDQGESAE) form a disordered region. A compositionally biased stretch (polar residues) spans 209–219 (VPTTDQGESAE).

The protein belongs to the bacterial ribosomal protein bL25 family. CTC subfamily. In terms of assembly, part of the 50S ribosomal subunit; part of the 5S rRNA/L5/L18/L25 subcomplex. Contacts the 5S rRNA. Binds to the 5S rRNA independently of L5 and L18.

Its function is as follows. This is one of the proteins that binds to the 5S RNA in the ribosome where it forms part of the central protuberance. The protein is Large ribosomal subunit protein bL25 of Legionella pneumophila (strain Paris).